The primary structure comprises 539 residues: Chaperonin GroEL (539 aa).

ATP is bound by residues 29–32 (TLGP), 86–90 (DGTTT), Gly413, and Asp492.

It belongs to the chaperonin (HSP60) family. As to quaternary structure, forms a cylinder of 14 subunits composed of two heptameric rings stacked back-to-back. Interacts with the co-chaperonin GroES.

The protein resides in the cytoplasm. The enzyme catalyses ATP + H2O + a folded polypeptide = ADP + phosphate + an unfolded polypeptide.. Together with its co-chaperonin GroES, plays an essential role in assisting protein folding. The GroEL-GroES system forms a nano-cage that allows encapsulation of the non-native substrate proteins and provides a physical environment optimized to promote and accelerate protein folding. This is Chaperonin GroEL from Fusobacterium nucleatum subsp. nucleatum (strain ATCC 25586 / DSM 15643 / BCRC 10681 / CIP 101130 / JCM 8532 / KCTC 2640 / LMG 13131 / VPI 4355).